Reading from the N-terminus, the 434-residue chain is UDP-N-acetylglucosamine 1-carboxyvinyltransferase (434 aa).

22–23 (KN) contacts phosphoenolpyruvate. R99 serves as a coordination point for UDP-N-acetyl-alpha-D-glucosamine. The active-site Proton donor is C123. Position 123 is a 2-(S-cysteinyl)pyruvic acid O-phosphothioketal (C123). UDP-N-acetyl-alpha-D-glucosamine contacts are provided by residues 128–132 (RPVDQ), D317, and I339.

It belongs to the EPSP synthase family. MurA subfamily.

It localises to the cytoplasm. It catalyses the reaction phosphoenolpyruvate + UDP-N-acetyl-alpha-D-glucosamine = UDP-N-acetyl-3-O-(1-carboxyvinyl)-alpha-D-glucosamine + phosphate. It participates in cell wall biogenesis; peptidoglycan biosynthesis. Its function is as follows. Cell wall formation. Adds enolpyruvyl to UDP-N-acetylglucosamine. The protein is UDP-N-acetylglucosamine 1-carboxyvinyltransferase of Paracidovorax citrulli (strain AAC00-1) (Acidovorax citrulli).